The following is a 216-amino-acid chain: Glutathione S-transferase 1, isoform B (216 aa).

The GST N-terminal domain maps to 1–80 (MDFYYLPGSA…YLVEKYGKPC (80 aa)). Glutathione-binding positions include Ser9, 50–52 (HCV), and 64–66 (ESR). A GST C-terminal domain is found at 89 to 210 (DPQKRAIVNQ…RSWAEAARPF (122 aa)).

The protein belongs to the GST superfamily. Theta family. Homodimer.

The enzyme catalyses RX + glutathione = an S-substituted glutathione + a halide anion + H(+). Conjugation of reduced glutathione to a wide number of exogenous and endogenous hydrophobic electrophiles. This Anopheles gambiae (African malaria mosquito) protein is Glutathione S-transferase 1, isoform B.